Reading from the N-terminus, the 182-residue chain is Methionine-R-sulfoxide reductase B2, mitochondrial (182 aa).

The transit peptide at Met1–Ala20 directs the protein to the mitochondrion. The region spanning Lys51 to Arg180 is the MsrB domain. Residues Cys90, Cys93, Cys146, and Cys149 each coordinate Zn(2+). Cys169 functions as the Nucleophile in the catalytic mechanism.

It belongs to the MsrB Met sulfoxide reductase family. In terms of assembly, interacts with DAOA; the interaction is direct. Requires Zn(2+) as cofactor. As to expression, ubiquitous. Detected in retina, ocular ciliary body, skeletal muscle, heart, colon, bone marrow, cerebellum, small intestine, fetal brain, fetal liver, kidney, spinal cord, lung, placenta and prostate.

It localises to the mitochondrion. The catalysed reaction is L-methionyl-[protein] + [thioredoxin]-disulfide + H2O = L-methionyl-(R)-S-oxide-[protein] + [thioredoxin]-dithiol. It carries out the reaction [thioredoxin]-disulfide + L-methionine + H2O = L-methionine (R)-S-oxide + [thioredoxin]-dithiol. Its function is as follows. Methionine-sulfoxide reductase that specifically reduces methionine (R)-sulfoxide back to methionine. While in many cases, methionine oxidation is the result of random oxidation following oxidative stress, methionine oxidation is also a post-translational modification that takes place on specific residue. Upon oxidative stress, may play a role in the preservation of mitochondrial integrity by decreasing the intracellular reactive oxygen species build-up through its scavenging role, hence contributing to cell survival and protein maintenance. This chain is Methionine-R-sulfoxide reductase B2, mitochondrial (MSRB2), found in Homo sapiens (Human).